The chain runs to 256 residues: 5-keto-4-deoxy-D-glucarate aldolase (256 aa).

The active-site Proton acceptor is the histidine 50. Glutamine 151 serves as a coordination point for substrate. Residue glutamate 153 coordinates Mg(2+). Residues serine 178 and aspartate 179 each coordinate substrate. A Mg(2+)-binding site is contributed by aspartate 179.

The protein belongs to the HpcH/HpaI aldolase family. KDGluc aldolase subfamily. In terms of assembly, homohexamer; trimer of dimers. It depends on Mg(2+) as a cofactor.

The enzyme catalyses 5-dehydro-4-deoxy-D-glucarate = 2-hydroxy-3-oxopropanoate + pyruvate. It carries out the reaction 2-dehydro-3-deoxy-D-glucarate = 2-hydroxy-3-oxopropanoate + pyruvate. The protein operates within carbohydrate acid metabolism; galactarate degradation; D-glycerate from galactarate: step 2/3. In terms of biological role, catalyzes the reversible retro-aldol cleavage of both 5-keto-4-deoxy-D-glucarate and 2-keto-3-deoxy-D-glucarate to pyruvate and tartronic semialdehyde. This is 5-keto-4-deoxy-D-glucarate aldolase from Shigella dysenteriae serotype 1 (strain Sd197).